Here is a 244-residue protein sequence, read N- to C-terminus: Diablo homolog, mitochondrial (244 aa).

The transit peptide at 1-38 directs the protein to the mitochondrion; that stretch reads MASLPRRLIWSFSYILRESFPIVSRRNCVSLLRASWRK. Residues 50-54 carry the IAP-binding motif; that stretch reads AIPVG. A compositionally biased stretch (basic and acidic residues) spans 207–218; sequence DEIKRTITEDKG. Residues 207–244 are disordered; it reads DEIKRTITEDKGNPPSGGSPRSSLSEEEEIPEAYLRED. Over residues 220-229 the composition is skewed to low complexity; that stretch reads PPSGGSPRSS.

It belongs to the Smac/DIABLO protein family. Homodimer.

Its subcellular location is the mitochondrion. Its function is as follows. Promotes apoptosis. Acts by opposing the inhibitory activity of inhibitor of apoptosis proteins (IAP). The polypeptide is Diablo homolog, mitochondrial (Xenopus tropicalis (Western clawed frog)).